A 322-amino-acid chain; its full sequence is Serine protease 38 (322 aa).

The N-terminal stretch at 1–28 (MAALTSGLGVLGYLLFPLLLASPTWVTS) is a signal peptide. Positions 29 to 55 (VSRRHPKSQANSLSGDVACGQPVLQGK) are cleaved as a propeptide — activation peptide. One can recognise a Peptidase S1 domain in the interval 56–289 (LLGGEFARDR…FLSWIRYHLQ (234 aa)). An intrachain disulfide couples cysteine 81 to cysteine 97. Residues histidine 96 and aspartate 146 each act as charge relay system in the active site. Asparagine 176 carries an N-linked (GlcNAc...) asparagine glycan. 3 disulfides stabilise this stretch: cysteine 179-cysteine 247, cysteine 210-cysteine 226, and cysteine 237-cysteine 265. Serine 241 functions as the Charge relay system in the catalytic mechanism. 2 N-linked (GlcNAc...) asparagine glycosylation sites follow: asparagine 250 and asparagine 276.

The protein belongs to the peptidase S1 family.

It localises to the secreted. This chain is Serine protease 38 (Prss38), found in Mus musculus (Mouse).